The primary structure comprises 579 residues: O-fucosyltransferase 24 (579 aa).

A helical; Signal-anchor for type II membrane protein transmembrane segment spans residues 58–78 (LWAFSLFLLSILGISLRLGLC). N133 carries N-linked (GlcNAc...) asparagine glycosylation. Position 355–357 (355–357 (HLR)) interacts with substrate. N-linked (GlcNAc...) asparagine glycans are attached at residues N528, N573, and N576.

It belongs to the glycosyltransferase GT106 family.

The protein localises to the membrane. Its pathway is glycan metabolism. This is O-fucosyltransferase 24 from Arabidopsis thaliana (Mouse-ear cress).